The following is a 267-amino-acid chain: ATP synthase subunit a (267 aa).

The next 5 helical transmembrane spans lie at 38–58 (WHID…FVFY), 98–118 (IAPL…MDLI), 145–165 (NITF…SIKI), 208–228 (LFGN…MPWW), and 238–258 (AIFH…LTIV).

This sequence belongs to the ATPase A chain family. F-type ATPases have 2 components, CF(1) - the catalytic core - and CF(0) - the membrane proton channel. CF(1) has five subunits: alpha(3), beta(3), gamma(1), delta(1), epsilon(1). CF(0) has three main subunits: a(1), b(2) and c(9-12). The alpha and beta chains form an alternating ring which encloses part of the gamma chain. CF(1) is attached to CF(0) by a central stalk formed by the gamma and epsilon chains, while a peripheral stalk is formed by the delta and b chains.

It localises to the cell inner membrane. Its function is as follows. Key component of the proton channel; it plays a direct role in the translocation of protons across the membrane. This is ATP synthase subunit a from Psychromonas ingrahamii (strain DSM 17664 / CCUG 51855 / 37).